Here is a 429-residue protein sequence, read N- to C-terminus: ETS domain-containing protein Elk-1 (429 aa).

The segment at residues 5–86 (VTLWQFLLQL…SGQKFVYKFV (82 aa)) is a DNA-binding region (ETS). Disordered stretches follow at residues 119–146 (HAGP…GLAR), 165–204 (SLQP…SPNP), and 227–253 (APNQ…KVEG). Over residues 169–178 (QPQPPIPPRP) the composition is skewed to pro residues. Residues Lys231, Lys250, and Lys255 each participate in a glycyl lysine isopeptide (Lys-Gly) (interchain with G-Cter in SUMO) cross-link. The segment covering 302-312 (STSTTEITQPQ) has biased composition (polar residues). A disordered region spans residues 302 to 354 (STSTTEITQPQKGRKPRDLELPLSPSLLGGQGPERTPGSGTSSGLQAPGPALT). At Ser325 the chain carries Phosphoserine; by MAPK1. A phosphothreonine; by MAPK1 mark is found at Thr337, Thr354, Thr364, and Thr369. The sufficient for interaction with MAD2L2 stretch occupies residues 350–400 (GPALTPSLLPTHTLTPVLLTPSSLPPSIHFWSTLSPIAPRSPAKLSFQFPS). A glycan (O-linked (GlcNAc) threonine) is linked at Thr382. Phosphoserine; by MAPK1 and MAPK8 is present on Ser384. At Ser390 the chain carries Phosphoserine; by MAPK1. Thr418 carries the post-translational modification Phosphothreonine; by MAPK1. Ser423 carries the phosphoserine; by MAPK1 modification.

Belongs to the ETS family. As to quaternary structure, interacts in its sumoylated form with PIAS2/PIASX which enhances its transcriptional activator activity. Interacts with MAD2L2; the interaction is direct and promotes phosphorylation by the kinases MAPK8 and/or MAPK9. Interacts with POU1F1. In terms of processing, sumoylation represses transcriptional activator activity as it results in recruitment of HDAC2 to target gene promoters which leads to decreased histone acetylation and reduced transactivator activity. It also regulates nuclear retention. Post-translationally, on mitogenic stimulation, phosphorylated on C-terminal serine and threonine residues by MAPK1 but also MAPK8 and/or MAPK9. Phosphorylation leads to loss of sumoylation and restores transcriptional activator activity. Phosphorylated and activated by CaMK4, MAPK11, MAPK12 and MAPK14. Upon bFGF stimulus, phosphorylated by PAK1. Phosphorylated by PRP4K at Thr-418; phosphorylation activation ELK1 transcriptional activity. Predominantly expressed in the brain, and to a lesser extent in the heart, liver and muscle.

The protein localises to the nucleus. Functionally, transcription factor that binds to purine-rich DNA sequences. Forms a ternary complex with SRF and the ETS and SRF motifs of the serum response element (SRE) on the promoter region of immediate early genes such as FOS and IER2. Induces target gene transcription upon JNK and MAPK-signaling pathways stimulation. This is ETS domain-containing protein Elk-1 from Mus musculus (Mouse).